Here is a 135-residue protein sequence, read N- to C-terminus: Large ribosomal subunit protein bL12c (135 aa).

It belongs to the bacterial ribosomal protein bL12 family. Homodimer. Part of the ribosomal stalk of the 50S ribosomal subunit. Forms a multimeric L10(L12)X complex, where L10 forms an elongated spine to which 2 to 4 L12 dimers bind in a sequential fashion. Binds GTP-bound translation factors.

The protein localises to the plastid. Its subcellular location is the chloroplast. Its function is as follows. Forms part of the ribosomal stalk which helps the ribosome interact with GTP-bound translation factors. Is thus essential for accurate translation. This chain is Large ribosomal subunit protein bL12c, found in Chara vulgaris (Common stonewort).